The chain runs to 200 residues: NAD(P)H dehydrogenase (quinone) (200 aa).

The region spanning 4 to 190 (VLVLYYSTYG…EGARFQGRHV (187 aa)) is the Flavodoxin-like domain. Residues 10 to 15 (STYGHV) and 78 to 80 (TRY) contribute to the FMN site. Position 12 (Y12) interacts with NAD(+). W98 is a binding site for substrate. Residues 113 to 119 (STASQHG) and H134 each bind FMN.

It belongs to the WrbA family. It depends on FMN as a cofactor.

It catalyses the reaction a quinone + NADH + H(+) = a quinol + NAD(+). It carries out the reaction a quinone + NADPH + H(+) = a quinol + NADP(+). The chain is NAD(P)H dehydrogenase (quinone) from Methylobacterium radiotolerans (strain ATCC 27329 / DSM 1819 / JCM 2831 / NBRC 15690 / NCIMB 10815 / 0-1).